The sequence spans 258 residues: Thiazole synthase (258 aa).

The active-site Schiff-base intermediate with DXP is the Lys98. 1-deoxy-D-xylulose 5-phosphate-binding positions include Gly159, 185 to 186 (AG), and 207 to 208 (NT).

The protein belongs to the ThiG family. In terms of assembly, homotetramer. Forms heterodimers with either ThiH or ThiS.

The protein resides in the cytoplasm. The enzyme catalyses [ThiS sulfur-carrier protein]-C-terminal-Gly-aminoethanethioate + 2-iminoacetate + 1-deoxy-D-xylulose 5-phosphate = [ThiS sulfur-carrier protein]-C-terminal Gly-Gly + 2-[(2R,5Z)-2-carboxy-4-methylthiazol-5(2H)-ylidene]ethyl phosphate + 2 H2O + H(+). Its pathway is cofactor biosynthesis; thiamine diphosphate biosynthesis. Functionally, catalyzes the rearrangement of 1-deoxy-D-xylulose 5-phosphate (DXP) to produce the thiazole phosphate moiety of thiamine. Sulfur is provided by the thiocarboxylate moiety of the carrier protein ThiS. In vitro, sulfur can be provided by H(2)S. The chain is Thiazole synthase from Cytophaga hutchinsonii (strain ATCC 33406 / DSM 1761 / CIP 103989 / NBRC 15051 / NCIMB 9469 / D465).